We begin with the raw amino-acid sequence, 82 residues long: Small ribosomal subunit protein bS16 (82 aa).

It belongs to the bacterial ribosomal protein bS16 family.

This is Small ribosomal subunit protein bS16 from Haemophilus ducreyi (strain 35000HP / ATCC 700724).